The chain runs to 244 residues: Capsid protein (244 aa).

A Bipartite nuclear localization signal motif is present at residues 1 to 24; that stretch reads MSTSKRKRADEAQWNKRSTKKKGS. Residues 1–39 form a disordered region; sequence MSTSKRKRADEAQWNKRSTKKKGSAPQAKKPGGKVEKPS.

It belongs to the geminiviridae capsid protein family. Homomultimer. Interacts with the movement protein. Binds to single-stranded and double-stranded viral DNA.

It localises to the virion. It is found in the host nucleus. Functionally, encapsidates the viral genome into characteristic twinned ('geminate') particles. Binds the genomic viral ssDNA and shuttles it into and out of the cell nucleus. Plays a role in protection of the genome from degradation, virus acquisition and transmission by insect vectors, infectivity, and systemic movement. The CP of monopartite geminiviruses is absolutely essential for virus movement. In Avena sativa (Oat), this protein is Capsid protein.